An 80-amino-acid polypeptide reads, in one-letter code: Cell division protein ZapB (80 aa).

Residues 3 to 80 (FEVLEKLEAK…ALLGKMEDVE (78 aa)) adopt a coiled-coil conformation.

Belongs to the ZapB family. In terms of assembly, homodimer. The ends of the coiled-coil dimer bind to each other, forming polymers. Interacts with FtsZ.

The protein localises to the cytoplasm. Functionally, non-essential, abundant cell division factor that is required for proper Z-ring formation. It is recruited early to the divisome by direct interaction with FtsZ, stimulating Z-ring assembly and thereby promoting cell division earlier in the cell cycle. Its recruitment to the Z-ring requires functional FtsA or ZipA. This is Cell division protein ZapB from Vibrio vulnificus (strain CMCP6).